We begin with the raw amino-acid sequence, 956 residues long: Outer capsid protein VP2 (956 aa).

This sequence belongs to the orbivirus VP2 family.

The protein localises to the virion. In terms of biological role, the VP2 protein is one of the two proteins (with VP5) which constitute the virus particle outer capsid. It is the major target of the host immunogenic response. Responsible for viral attachment to target host cell, probably by binding to sialic acid. This attachment induces virion internalization predominantly through clathrin-dependent endocytosis. In Bluetongue virus 10 (isolate USA) (BTV 10), this protein is Outer capsid protein VP2 (Segment-2).